A 285-amino-acid chain; its full sequence is (2Z,6Z)-farnesyl diphosphate synthase CPT6, chloroplastic (285 aa).

A chloroplast-targeting transit peptide spans 1 to 30; it reads MNSLFVGRPIVKSSYNVYTLPSSICGGHFF. D65 is an active-site residue.

The protein belongs to the UPP synthase family. Requires Mg(2+) as cofactor. As to expression, expressed in roots and red fruits.

It is found in the plastid. It localises to the chloroplast. It catalyses the reaction 2 isopentenyl diphosphate + dimethylallyl diphosphate = (2Z,6Z)-farnesyl diphosphate + 2 diphosphate. The enzyme catalyses isopentenyl diphosphate + dimethylallyl diphosphate = neryl diphosphate + diphosphate. The catalysed reaction is neryl diphosphate + isopentenyl diphosphate = (2Z,6Z)-farnesyl diphosphate + diphosphate. In terms of biological role, uses neryl diphosphate to catalyze the cis-prenyl chain elongation and produce the 15 carbon product (2Z,6Z)-farnesyl diphosphate. This is (2Z,6Z)-farnesyl diphosphate synthase CPT6, chloroplastic from Solanum lycopersicum (Tomato).